Reading from the N-terminus, the 1032-residue chain is Putative oxidoreductase YgfK (1032 aa).

In terms of domain architecture, 4Fe-4S ferredoxin-type spans R928 to K958. [4Fe-4S] cluster is bound by residues C938, C941, C944, and C948.

[4Fe-4S] cluster serves as cofactor.

Its function is as follows. Could be an iron-sulfur flavoprotein with NADPH:O(2) oxidoreductase activity. This chain is Putative oxidoreductase YgfK (ygfK), found in Escherichia coli (strain K12).